Reading from the N-terminus, the 137-residue chain is Large ribosomal subunit protein uL16 (137 aa).

The protein belongs to the universal ribosomal protein uL16 family. As to quaternary structure, part of the 50S ribosomal subunit.

Binds 23S rRNA and is also seen to make contacts with the A and possibly P site tRNAs. The chain is Large ribosomal subunit protein uL16 from Streptococcus suis (strain 98HAH33).